A 317-amino-acid polypeptide reads, in one-letter code: Ferrochelatase (317 aa).

Positions 192 and 271 each coordinate Fe cation.

It belongs to the ferrochelatase family.

The protein resides in the cytoplasm. The catalysed reaction is heme b + 2 H(+) = protoporphyrin IX + Fe(2+). It participates in porphyrin-containing compound metabolism; protoheme biosynthesis; protoheme from protoporphyrin-IX: step 1/1. In terms of biological role, catalyzes the ferrous insertion into protoporphyrin IX. The sequence is that of Ferrochelatase from Citrifermentans bemidjiense (strain ATCC BAA-1014 / DSM 16622 / JCM 12645 / Bem) (Geobacter bemidjiensis).